We begin with the raw amino-acid sequence, 934 residues long: 2-oxoglutarate dehydrogenase E1 component (934 aa).

Belongs to the alpha-ketoglutarate dehydrogenase family. In terms of assembly, homodimer. Part of the 2-oxoglutarate dehydrogenase (OGDH) complex composed of E1 (2-oxoglutarate dehydrogenase), E2 (dihydrolipoamide succinyltransferase) and E3 (dihydrolipoamide dehydrogenase); the complex contains multiple copies of the three enzymatic components (E1, E2 and E3). The cofactor is thiamine diphosphate.

The catalysed reaction is N(6)-[(R)-lipoyl]-L-lysyl-[protein] + 2-oxoglutarate + H(+) = N(6)-[(R)-S(8)-succinyldihydrolipoyl]-L-lysyl-[protein] + CO2. In terms of biological role, E1 component of the 2-oxoglutarate dehydrogenase (OGDH) complex which catalyzes the decarboxylation of 2-oxoglutarate, the first step in the conversion of 2-oxoglutarate to succinyl-CoA and CO(2). The chain is 2-oxoglutarate dehydrogenase E1 component (sucA) from Coxiella burnetii (strain RSA 493 / Nine Mile phase I).